The sequence spans 236 residues: Peroxisomal membrane protein PMP27 (236 aa).

This sequence belongs to the peroxin-11 family. As to quaternary structure, homooligomer. Interacts with PEX34.

It is found in the peroxisome membrane. Its function is as follows. Involved in peroxisomal proliferation. Promotes peroxisome division and biogenesis. This is Peroxisomal membrane protein PMP27 (PEX11) from Saccharomyces cerevisiae (strain ATCC 204508 / S288c) (Baker's yeast).